The following is a 310-amino-acid chain: MEIPHIPVLLNEVQEIFKNLKTGYFLDCTLGFGGHSEALLKNHPDLKFIACDQDQQALEFSKKRLKDFRNRITFMQSNFSEVLEKISHKEELRGILADIGVSSFQLDNNERGFSVNSDFLDMRMNQNSKISAYEIINTYTKEQLTSIFKDYGELHDAHFIAEKICLERSKNPIKSAKELYQIIGKGKQNHRKISKATLAFQAIRIEVNQELKVLKDFLGHLENLKPKNCILAIISFHSLEDRIVKQFFKKWSKNCICNEKIMRCECGNNHSLGQIITKKAISASKEELLKNSRSSCAKMRAFYFNNLDNK.

S-adenosyl-L-methionine contacts are provided by residues 33–35 (GGH), aspartate 52, phenylalanine 79, aspartate 98, and glutamine 105.

The protein belongs to the methyltransferase superfamily. RsmH family.

The protein localises to the cytoplasm. It catalyses the reaction cytidine(1402) in 16S rRNA + S-adenosyl-L-methionine = N(4)-methylcytidine(1402) in 16S rRNA + S-adenosyl-L-homocysteine + H(+). Functionally, specifically methylates the N4 position of cytidine in position 1402 (C1402) of 16S rRNA. This Campylobacter jejuni (strain RM1221) protein is Ribosomal RNA small subunit methyltransferase H.